Here is a 167-residue protein sequence, read N- to C-terminus: U-scoloptoxin(08)-Er5a (167 aa).

Positions 1-22 are cleaved as a signal peptide; sequence MKTNCEFPLLCLLIVLVANVEG. A propeptide spanning residues 23 to 94 is cleaved from the precursor; that stretch reads EVEDTGLKMV…KRLWRNWERR (72 aa). 3 RLWRNWE repeats span residues 34 to 40, 61 to 67, and 86 to 92; these read RLWRNWE. Position 95 is a pyrrolidone carboxylic acid (Gln95). The RLWRNWE 4; approximate repeat unit spans residues 107–113; the sequence is ELWRNWE. Residues 112-118 constitute a propeptide that is removed on maturation; that stretch reads WEDLKRR. Residue Gln119 is modified to Pyrrolidone carboxylic acid. The stretch at 134-140 is one RLWRNWE 5 repeat; that stretch reads RLWRNWE. The propeptide occupies 139–167; it reads WEDNHATLRKRSADSLSRQKRLGKERGKE. The tract at residues 147-167 is disordered; it reads RKRSADSLSRQKRLGKERGKE.

It belongs to the scoloptoxin-08 family. In terms of tissue distribution, expressed by the venom gland.

It is found in the secreted. This Ethmostigmus rubripes (Giant centipede) protein is U-scoloptoxin(08)-Er5a.